The primary structure comprises 1052 residues: Malignant fibrous histiocytoma-amplified sequence 1 (1052 aa).

The residue at position 2 (A2) is an N-acetylalanine. LRR repeat units lie at residues 64-85, 88-109, 112-133, 136-157, 159-180, 182-203, 205-226, 228-249, 251-272, 274-296, 297-318, 320-341, and 343-364; these read DIEALNLGNNGLEEVPEGLGSA, SLRVLVLRRNRFARLPPAVAEL, HLTELDVSHNRLTALGAEVVSA, ELRKLNLSHNQLPALPAQLGAL, HLEELDVSFNRLAHLPDSLSCL, RLRTLDVDHNQLTAFPRQLLQL, ALEELDVSSNRLRGLPEDISAL, ALKILWLSGAELGTLPAGFCEL, SLESLMLDNNGLQALPAQFSCL, RLKMLNLSSNLFEEFPAALLPLA, GLEELYLSRNQLTSVPSLISGL, RLLTLWLDNNRIRYLPDSIVEL, and GLEELVLQGNQIAVLPDHFGQL. The required for interaction with PJA2 stretch occupies residues 64-364; that stretch reads DIEALNLGNN…AVLPDHFGQL (301 aa). Positions 64–649 are required for interaction with PPP2R2A; the sequence is DIEALNLGNN…DKLLSVAEHR (586 aa). The region spanning 403–649 is the Roc domain; it reads QPAVQPRLKL…DKLLSVAEHR (247 aa). K601 carries the post-translational modification N6-acetyllysine.

Interacts with RAF1. Interacts with HSPD1. Interacts with PPP2CA; retains PPP2CA into the cytoplasm and excludes it from the nucleus. Interacts with PPP2R2A; the interaction is direct. Interacts with PJA2. Post-translationally, ubiquitinated. Ubiquitination by PJA2 does not lead MFHAS1 to proteasomal degradation but positively regulates its function in polarization of macrophages. As to expression, ubiquitously expressed. Overexpressed in malignant fibrous histiocytomas. Expressed in red blood cells (at protein level).

Its subcellular location is the cytoplasm. Probable GTP-binding protein. Functions in innate immunity and more specifically the inflammatory response as a regulator of the Toll-like receptor TLR2 and TLR4 signaling pathways. Negatively regulates the part of the TLR4 signaling pathway that leads to the activation of the transcription factor AP-1. By retaining the phosphatase complex PP2A into the cytoplasm, prevents the dephosphorylation of the AP-1 subunit JUN which is required for proper activation of the transcription factor. Both inhibits and activates the TLR2-dependent signaling pathway. Positively regulates the TLR2 signaling pathway to activate specifically the downstream p38 and JNK MAP kinases and promote the polarization of macrophages toward the pro-inflammatory M1 phenotype. It may also play a role in the regulation of inflammation induced by high glucose through the PKB/AKT signaling pathway. Also involved in erythrocyte differentiation through activation of the ERK1/ERK2 signaling pathway. This is Malignant fibrous histiocytoma-amplified sequence 1 from Homo sapiens (Human).